A 205-amino-acid chain; its full sequence is NAD(P)H dehydrogenase (quinone) (205 aa).

Residues 3–194 enclose the Flavodoxin-like domain; it reads VLVVYYSMYG…AAARYQGKHV (192 aa). FMN-binding positions include 9-14 and 82-84; these read SMYGHI and TRF. Tyrosine 11 serves as a coordination point for NAD(+). Tryptophan 102 contributes to the substrate binding site. Histidine 138 lines the FMN pocket.

This sequence belongs to the WrbA family. It depends on FMN as a cofactor.

The enzyme catalyses a quinone + NADH + H(+) = a quinol + NAD(+). It carries out the reaction a quinone + NADPH + H(+) = a quinol + NADP(+). The chain is NAD(P)H dehydrogenase (quinone) from Geotalea daltonii (strain DSM 22248 / JCM 15807 / FRC-32) (Geobacter daltonii).